Reading from the N-terminus, the 220-residue chain is DNA replication complex GINS protein SLD5 (220 aa).

Belongs to the GINS4/SLD5 family. In terms of assembly, component of the GINS complex. Interacts with EOL1 in the nucleus.

Its subcellular location is the nucleus. In terms of biological role, the GINS complex plays an essential role in the initiation of DNA replication. Required during embryogenesis. In Arabidopsis thaliana (Mouse-ear cress), this protein is DNA replication complex GINS protein SLD5.